Consider the following 440-residue polypeptide: Tyrosine--tRNA ligase (440 aa).

L-tyrosine is bound at residue Tyr-46. The short motif at 51–60 (PTAPSLHIGN) is the 'HIGH' region element. Residues Tyr-181 and Gln-185 each contribute to the L-tyrosine site. The short motif at 241–245 (KFGKS) is the 'KMSKS' region element. Lys-244 provides a ligand contact to ATP. The region spanning 373–430 (DRIAQAGVSAGLFKSISEARKTIKSGGVYVNNVRVEDEEQLLGDGDFLKGRFVVLRRG) is the S4 RNA-binding domain.

It belongs to the class-I aminoacyl-tRNA synthetase family. TyrS type 1 subfamily. In terms of assembly, homodimer.

It localises to the cytoplasm. It carries out the reaction tRNA(Tyr) + L-tyrosine + ATP = L-tyrosyl-tRNA(Tyr) + AMP + diphosphate + H(+). In terms of biological role, catalyzes the attachment of tyrosine to tRNA(Tyr) in a two-step reaction: tyrosine is first activated by ATP to form Tyr-AMP and then transferred to the acceptor end of tRNA(Tyr). In Bifidobacterium animalis subsp. lactis (strain AD011), this protein is Tyrosine--tRNA ligase.